The chain runs to 234 residues: Large ribosomal subunit protein uL1 (234 aa).

This sequence belongs to the universal ribosomal protein uL1 family. As to quaternary structure, part of the 50S ribosomal subunit.

Its function is as follows. Binds directly to 23S rRNA. The L1 stalk is quite mobile in the ribosome, and is involved in E site tRNA release. Functionally, protein L1 is also a translational repressor protein, it controls the translation of the L11 operon by binding to its mRNA. The protein is Large ribosomal subunit protein uL1 of Erwinia tasmaniensis (strain DSM 17950 / CFBP 7177 / CIP 109463 / NCPPB 4357 / Et1/99).